The following is a 176-amino-acid chain: RNA polymerase sigma factor SigZ (176 aa).

The Polymerase core binding motif lies at 30-43 (DLLQIVFMKIQVHL). Residues 125–144 (QKELSEKLGISYSGAKSRVQ) constitute a DNA-binding region (H-T-H motif).

It belongs to the sigma-70 factor family. ECF subfamily.

Functionally, sigma factors are initiation factors that promote the attachment of RNA polymerase to specific initiation sites and are then released. This is RNA polymerase sigma factor SigZ (sigZ) from Bacillus subtilis (strain 168).